A 245-amino-acid chain; its full sequence is MTEVLYFLDCYLREFEAIVEKVTDDKYVVLDRTAFYPESGGQPSDTGKLVREEDGAEFEVVYVGKFNGDISHEITPVDGNAALGLKAGDRVRGIIDWDRRYRHMRMHTATHVIANVIEKEAGAQITGNQLGLDKSRVDFSLEAFDRDKFAEYEKIANKVITENHPVNLYLVSRKEAEEKLSRLTTLAKGFSEEISEVRLVEIEGITIEACGGTHLKNTGEIKGIKIEKLQNKGKSNRRMYFTLLD.

The Zn(2+) site is built by His107, His111, Cys210, and His214.

Belongs to the class-II aminoacyl-tRNA synthetase family. Editing domain AlaX-M subfamily. Requires Zn(2+) as cofactor.

It localises to the cytoplasm. Its function is as follows. Functions in trans to edit the amino acid moiety from mischarged charged tRNA(Ala). The protein is Alanyl-tRNA editing protein AlaX-M (alaXM) of Methanosarcina acetivorans (strain ATCC 35395 / DSM 2834 / JCM 12185 / C2A).